Consider the following 55-residue polypeptide: ATP synthase F(0) complex subunit 8 (55 aa).

A helical membrane pass occupies residues 4-24; it reads LLPTPWFTIFIYAWMVLLAVI.

Belongs to the ATPase protein 8 family. Component of the ATP synthase complex composed at least of ATP5F1A/subunit alpha, ATP5F1B/subunit beta, ATP5MC1/subunit c (homooctomer), MT-ATP6/subunit a, MT-ATP8/subunit 8, ATP5ME/subunit e, ATP5MF/subunit f, ATP5MG/subunit g, ATP5MK/subunit k, ATP5MJ/subunit j, ATP5F1C/subunit gamma, ATP5F1D/subunit delta, ATP5F1E/subunit epsilon, ATP5PF/subunit F6, ATP5PB/subunit b, ATP5PD/subunit d, ATP5PO/subunit OSCP. ATP synthase complex consists of a soluble F(1) head domain (subunits alpha(3) and beta(3)) - the catalytic core - and a membrane F(0) domain - the membrane proton channel (subunits c, a, 8, e, f, g, k and j). These two domains are linked by a central stalk (subunits gamma, delta, and epsilon) rotating inside the F1 region and a stationary peripheral stalk (subunits F6, b, d, and OSCP).

It localises to the mitochondrion membrane. Its function is as follows. Subunit 8, of the mitochondrial membrane ATP synthase complex (F(1)F(0) ATP synthase or Complex V) that produces ATP from ADP in the presence of a proton gradient across the membrane which is generated by electron transport complexes of the respiratory chain. ATP synthase complex consist of a soluble F(1) head domain - the catalytic core - and a membrane F(1) domain - the membrane proton channel. These two domains are linked by a central stalk rotating inside the F(1) region and a stationary peripheral stalk. During catalysis, ATP synthesis in the catalytic domain of F(1) is coupled via a rotary mechanism of the central stalk subunits to proton translocation. In vivo, can only synthesize ATP although its ATP hydrolase activity can be activated artificially in vitro. Part of the complex F(0) domain. The polypeptide is ATP synthase F(0) complex subunit 8 (Dicentrarchus labrax (European seabass)).